The primary structure comprises 255 residues: Sushi domain-containing protein 3 (255 aa).

The interval 1–25 (MRWAAATLRGKARPRGRAGVTTPAP) is disordered. Topologically, residues 1–103 (MRWAAATLRG…VPPHETFGFK (103 aa)) are extracellular. An N-linked (GlcNAc...) asparagine glycan is attached at Asn-27. One can recognise a Sushi domain in the interval 30–93 (GTCAKLRLPP…WSSGSPVCKL (64 aa)). 2 cysteine pairs are disulfide-bonded: Cys-32-Cys-75 and Cys-61-Cys-91. Residues 104-124 (VAVIASIVSCAIILLMSMAFL) form a helical membrane-spanning segment. Residues 125 to 255 (TCCLLKCVKK…PQQPAAYALG (131 aa)) lie on the Cytoplasmic side of the membrane. A disordered region spans residues 173 to 255 (SGPSQAHDNH…PQQPAAYALG (83 aa)). Residues 179-191 (HDNHSFTTDHGES) show a composition bias toward basic and acidic residues.

In terms of tissue distribution, highly expressed in estrogen receptor-positive breast tumors.

Its subcellular location is the cell membrane. May play a role in breast tumorigenesis by promoting estrogen-dependent cell proliferation, cell-cell interactions and migration. The protein is Sushi domain-containing protein 3 (SUSD3) of Homo sapiens (Human).